A 443-amino-acid chain; its full sequence is Threonine/serine transporter TdcC (443 aa).

11 consecutive transmembrane segments (helical) span residues T22–I42, A44–F64, G97–V117, F140–M160, V163–I183, I207–I227, M261–A281, F311–F331, I366–L386, I389–I409, and D423–F443.

Belongs to the amino acid/polyamine transporter 2 family. SdaC/TdcC subfamily.

The protein resides in the cell inner membrane. The enzyme catalyses L-threonine(in) + H(+)(in) = L-threonine(out) + H(+)(out). It carries out the reaction L-serine(in) + H(+)(in) = L-serine(out) + H(+)(out). In terms of biological role, involved in the import of threonine and serine into the cell, with the concomitant import of a proton (symport system). The protein is Threonine/serine transporter TdcC of Shigella sonnei (strain Ss046).